An 84-amino-acid chain; its full sequence is Neurotoxin BmK-M10 (84 aa).

Positions 1-19 (MNYLVMISFALLLMKGVES) are cleaved as a signal peptide. The LCN-type CS-alpha/beta domain occupies 21–83 (RDAYIAKPEN…VPIRVPGKCQ (63 aa)). 4 disulfides stabilise this stretch: cysteine 31–cysteine 82, cysteine 35–cysteine 55, cysteine 41–cysteine 65, and cysteine 45–cysteine 67. Position 84 (arginine 84) is a propeptide, removed by a carboxypeptidase.

Expressed by the venom gland.

It localises to the secreted. Binds to voltage-dependent sodium channels (Nav) and voltage-dependent delayed rectifier potassium channels and inhibits the inactivation of the activated channels, thereby blocking neuronal transmission. Administration to mice at a dosage of 0.8 mg/kg produces an analgesic effect. The sequence is that of Neurotoxin BmK-M10 from Olivierus martensii (Manchurian scorpion).